Here is a 309-residue protein sequence, read N- to C-terminus: Taste receptor type 2 member 31 (309 aa).

The Extracellular portion of the chain corresponds to 1–2 (MT). Residues 3–23 (TFIPIIFSSLVVVIFVIGNFA) form a helical membrane-spanning segment. Topologically, residues 24-55 (NGFIALVNSIEWFKRQKISFADQILTALAVSR) are cytoplasmic. A helical membrane pass occupies residues 56–76 (VGLLWVLLLNWYSTVLNPAFY). Over 77 to 100 (SVEVRTTAYNVWAVTGHFSNWLAT) the chain is Extracellular. Residues 101–121 (SLSIFYLLKIANFSNLIFLHL) form a helical membrane-spanning segment. Topologically, residues 122–126 (KRRVK) are cytoplasmic. Residues 127-147 (SVILVMLLGPLLFLACQLFMI) form a helical membrane-spanning segment. The Extracellular segment spans residues 148–181 (NMKEIVRTKEYEGNMTWKIKLRSAVYLSDATVTT). The N-linked (GlcNAc...) asparagine glycan is linked to Asn161. The helical transmembrane segment at 182 to 202 (LGNLVPFTLTLLCFLLLICSL) threads the bilayer. Residues 203–229 (CKHLKKMQLHGKGSQDPSTKVHIKVLQ) lie on the Cytoplasmic side of the membrane. A helical membrane pass occupies residues 230-250 (TVISFLLLCAIYFLSIMISVW). Residues 251 to 259 (SFGSLKNKP) lie on the Extracellular side of the membrane. A helical transmembrane segment spans residues 260–280 (VFMFCKAMRFSYPSIHPFILI). Residues 281–309 (WGNKKLKQTFLSVLRQVRYWVKGEKPSSP) are Cytoplasmic-facing.

The protein belongs to the G-protein coupled receptor T2R family.

The protein resides in the membrane. In terms of biological role, receptor that may play a role in the perception of bitterness and is gustducin-linked. May play a role in sensing the chemical composition of the gastrointestinal content. The activity of this receptor may stimulate alpha gustducin, mediate PLC-beta-2 activation and lead to the gating of TRPM5. The chain is Taste receptor type 2 member 31 (TAS2R31) from Pan troglodytes (Chimpanzee).